A 128-amino-acid polypeptide reads, in one-letter code: UPF0325 protein CKO_03204 (128 aa).

Belongs to the UPF0325 family.

The protein is UPF0325 protein CKO_03204 of Citrobacter koseri (strain ATCC BAA-895 / CDC 4225-83 / SGSC4696).